The following is a 433-amino-acid chain: Probable D-serine dehydratase (433 aa).

N6-(pyridoxal phosphate)lysine is present on lysine 110.

It belongs to the serine/threonine dehydratase family. DsdA subfamily. The cofactor is pyridoxal 5'-phosphate.

The enzyme catalyses D-serine = pyruvate + NH4(+). This chain is Probable D-serine dehydratase, found in Oenococcus oeni (strain ATCC BAA-331 / PSU-1).